We begin with the raw amino-acid sequence, 218 residues long: 2-phospho-L-lactate guanylyltransferase (218 aa).

Belongs to the CofC family. As to quaternary structure, homodimer.

The catalysed reaction is (2S)-2-phospholactate + GTP + H(+) = (2S)-lactyl-2-diphospho-5'-guanosine + diphosphate. The protein operates within cofactor biosynthesis; coenzyme F420 biosynthesis. Guanylyltransferase that catalyzes the activation of (2S)-2-phospholactate (2-PL) as (2S)-lactyl-2-diphospho-5'-guanosine, via the condensation of 2-PL with GTP. It is involved in the biosynthesis of coenzyme F420, a hydride carrier cofactor. This Methanocaldococcus fervens (strain DSM 4213 / JCM 15782 / AG86) (Methanococcus fervens) protein is 2-phospho-L-lactate guanylyltransferase.